A 74-amino-acid polypeptide reads, in one-letter code: Large ribosomal subunit protein bL31 (74 aa).

Cysteine 16, cysteine 18, cysteine 38, and cysteine 41 together coordinate Zn(2+).

Belongs to the bacterial ribosomal protein bL31 family. Type A subfamily. In terms of assembly, part of the 50S ribosomal subunit. It depends on Zn(2+) as a cofactor.

Binds the 23S rRNA. In Salinispora tropica (strain ATCC BAA-916 / DSM 44818 / JCM 13857 / NBRC 105044 / CNB-440), this protein is Large ribosomal subunit protein bL31.